A 447-amino-acid chain; its full sequence is Serine/threonine-protein phosphatase 2A 55 kDa regulatory subunit B delta isoform (447 aa).

7 WD repeats span residues 26-65, 91-132, 175-213, 224-264, 283-321, 338-379, and 414-447; these read AEAD…KNRP, EIEE…KRAE, AHTY…RSFN, ELTE…LCDR, EIIS…RPVE, ENDC…DITL, and DFNK…DKMN.

It belongs to the phosphatase 2A regulatory subunit B family. In terms of assembly, PP2A consists of a common heterodimeric core enzyme, composed of a 36 kDa catalytic subunit (subunit C) and a 65 kDa constant regulatory subunit (PR65 or subunit A), that associates with a variety of regulatory subunits.

It localises to the cytoplasm. Substrate-recognition subunit of protein phosphatase 2A (PP2A) that plays a key role in cell cycle by controlling mitosis entry and exit. The activity of PP2A complexes containing PPP2R2D (PR55-delta) fluctuate during the cell cycle: the activity is high in interphase and low in mitosis. This Danio rerio (Zebrafish) protein is Serine/threonine-protein phosphatase 2A 55 kDa regulatory subunit B delta isoform (ppp2r2d).